Reading from the N-terminus, the 193-residue chain is NADH-quinone oxidoreductase subunit B (193 aa).

4 residues coordinate [4Fe-4S] cluster: cysteine 72, cysteine 73, cysteine 137, and cysteine 167.

It belongs to the complex I 20 kDa subunit family. In terms of assembly, NDH-1 is composed of 14 different subunits. Subunits NuoB, C, D, E, F, and G constitute the peripheral sector of the complex. It depends on [4Fe-4S] cluster as a cofactor.

The protein resides in the cell inner membrane. It catalyses the reaction a quinone + NADH + 5 H(+)(in) = a quinol + NAD(+) + 4 H(+)(out). In terms of biological role, NDH-1 shuttles electrons from NADH, via FMN and iron-sulfur (Fe-S) centers, to quinones in the respiratory chain. The immediate electron acceptor for the enzyme in this species is believed to be ubiquinone. Couples the redox reaction to proton translocation (for every two electrons transferred, four hydrogen ions are translocated across the cytoplasmic membrane), and thus conserves the redox energy in a proton gradient. In Bartonella quintana (strain Toulouse) (Rochalimaea quintana), this protein is NADH-quinone oxidoreductase subunit B.